The chain runs to 517 residues: Endoglycoceramidase (517 aa).

A signal peptide spans 1–17; that stretch reads MISVALIILFLAKVISG. Asparagine 99 is a glycosylation site (N-linked (GlcNAc...) asparagine). Glutamate 230 (proton donor) is an active-site residue. Residues asparagine 298, asparagine 380, and asparagine 393 are each glycosylated (N-linked (GlcNAc...) asparagine).

It belongs to the glycosyl hydrolase 5 (cellulase A) family. Expressed uniformly in digestive cells, tentacles and peduncle regions suggesting expression in the endoderm throughout the whole body (at protein level).

The protein resides in the secreted. The enzyme catalyses an oligoglycosyl-(1-&gt;4)-beta-D-glucosyl-(1&lt;-&gt;1)-ceramide + H2O = an oligoglycosyl-(1-&gt;4)-D-glucose + an N-acyl-sphingoid base. Its activity is regulated as follows. Cu(2+), zinc, manganese, calcium, magnesium and EDTA have no significant effects on enzyme activity. Enzyme requires presence of detergents such as Triton X-100 and Lubrol PX for the hydrolysis of glycosphingolipids. Taurodeoxycholate strongly inhibits the enzyme activity. Functionally, hydrolysis of the glycosidic linkage between oligosaccharides and ceramides of glycosphingolipids, optimal substrates appear to be the glycosphingolipids with a gangliotetraose structure. In Hydra vulgaris (Hydra), this protein is Endoglycoceramidase.